A 392-amino-acid polypeptide reads, in one-letter code: MGDHFIRHIALLGFEKRFVPSQHYVYMFLVKWQDLSEKVVYRRFTEIYEFHKILKEMFPIEAGDINPENRIIPHLPAPRWYDGQRVAESRQGTLTEYCSTLMSLPVKISRCPHLLNFFKVRPDDLKLPTDSQVKKPETYLMPKDGKNNAADITGPIILQTYRAIADYEKGSSSQMALATGDVVDVVEKNESGWWFCQMKTKRGWVPASYLEPLDSPDEAEDPEPNYAGEPYITIKAYTAVLEDEISLEEGEAIEVIHKLLDGWWVIRKEDVTGYFPSMYLQKAGQDVAQAKSQIKSRGAPPRRSSIRNAHSIHQRSRKRLSQDTYRRNSVRFMQQRRHQRPEPQRSRSALREQQQPKTERPKPQPAVPPRPSADLILHRCSESTKRKLASAV.

Residues 4 to 125 (HFIRHIALLG…NFFKVRPDDL (122 aa)) enclose the PX domain. SH3 domains follow at residues 156 to 215 (IILQ…PLDS) and 226 to 285 (YAGE…KAGQ). The segment at 290–392 (AKSQIKSRGA…STKRKLASAV (103 aa)) is disordered. Phosphoserine occurs at positions 304 and 305. Over residues 310 to 319 (HSIHQRSRKR) the composition is skewed to basic residues. Phosphoserine is present on residues S321, S329, and S348. A compositionally biased stretch (basic and acidic residues) spans 376 to 385 (ILHRCSESTK).

As to quaternary structure, component of the phagocyte NADPH oxidase complex composed of an obligatory core heterodimer formed by the membrane proteins CYBA and CYBB and the cytosolic regulatory subunits NCF1/p47-phox, NCF2/p67-phox, NCF4/p40-phox and the small GTPase RAC1 or RAC2. Part of a cytosolic complex composed at least by NCF1, NCF2 and NCF4. Interacts (via C-terminus) with NCF2 (via the C-terminal SH3 domain). Interacts with NCF4. Interacts with CYBB. Interacts (via the second SH3 domain) with CYBA; interaction is phosphorylation-dependent. Interacts with NOXA1. Interacts with ADAM15. Interacts with TRAF4. Interacts with FASLG. Interacts with PARK7 (via C-terminus); the interaction is enhanced by LPS and modulates NCF1 phosphorylation and membrane translocation. Post-translationally, phosphorylated by PRKCD; phosphorylation induces activation of NCF1, leading to assembly and activation of the NADPH oxidase complex.

The protein localises to the cytoplasm. Its subcellular location is the cytosol. It localises to the membrane. Its function is as follows. Subunit of the phagocyte NADPH oxidase complex that mediates the transfer of electrons from cytosolic NADPH to O2 to produce the superoxide anion (O2(-)). In the activated complex, electrons are first transferred from NADPH to flavin adenine dinucleotide (FAD) and subsequently transferred via two heme molecules to molecular oxygen, producing superoxide through an outer-sphere reaction. Activation of the NADPH oxidase complex is initiated by the assembly of cytosolic subunits of the NADPH oxidase complex with the core NADPH oxidase complex to form a complex at the plasma membrane or phagosomal membrane. This activation process is initiated by phosphorylation dependent binding of the cytosolic NCF1/p47-phox subunit to the C-terminus of CYBA/p22-phox. This Bos taurus (Bovine) protein is Neutrophil cytosol factor 1.